A 145-amino-acid chain; its full sequence is D-aminoacyl-tRNA deacylase (145 aa).

Residues 137–138 carry the Gly-cisPro motif, important for rejection of L-amino acids motif; the sequence is GP.

It belongs to the DTD family. Homodimer.

Its subcellular location is the cytoplasm. The enzyme catalyses glycyl-tRNA(Ala) + H2O = tRNA(Ala) + glycine + H(+). It carries out the reaction a D-aminoacyl-tRNA + H2O = a tRNA + a D-alpha-amino acid + H(+). Its function is as follows. An aminoacyl-tRNA editing enzyme that deacylates mischarged D-aminoacyl-tRNAs. Also deacylates mischarged glycyl-tRNA(Ala), protecting cells against glycine mischarging by AlaRS. Acts via tRNA-based rather than protein-based catalysis; rejects L-amino acids rather than detecting D-amino acids in the active site. By recycling D-aminoacyl-tRNA to D-amino acids and free tRNA molecules, this enzyme counteracts the toxicity associated with the formation of D-aminoacyl-tRNA entities in vivo and helps enforce protein L-homochirality. This is D-aminoacyl-tRNA deacylase from Escherichia coli O139:H28 (strain E24377A / ETEC).